Consider the following 354-residue polypeptide: Methylthioribose-1-phosphate isomerase (354 aa).

Residues 49 to 51 (RGA), arginine 92, and glutamine 199 contribute to the substrate site. The active-site Proton donor is aspartate 240. Substrate is bound at residue 250-251 (NK).

The protein belongs to the eIF-2B alpha/beta/delta subunits family. MtnA subfamily.

The enzyme catalyses 5-(methylsulfanyl)-alpha-D-ribose 1-phosphate = 5-(methylsulfanyl)-D-ribulose 1-phosphate. It functions in the pathway amino-acid biosynthesis; L-methionine biosynthesis via salvage pathway; L-methionine from S-methyl-5-thio-alpha-D-ribose 1-phosphate: step 1/6. Catalyzes the interconversion of methylthioribose-1-phosphate (MTR-1-P) into methylthioribulose-1-phosphate (MTRu-1-P). The protein is Methylthioribose-1-phosphate isomerase of Koribacter versatilis (strain Ellin345).